We begin with the raw amino-acid sequence, 315 residues long: Ribosomal RNA small subunit methyltransferase H (315 aa).

S-adenosyl-L-methionine is bound by residues 37–39, D57, F83, D105, and Q112; that span reads GGH.

It belongs to the methyltransferase superfamily. RsmH family.

It is found in the cytoplasm. The enzyme catalyses cytidine(1402) in 16S rRNA + S-adenosyl-L-methionine = N(4)-methylcytidine(1402) in 16S rRNA + S-adenosyl-L-homocysteine + H(+). Specifically methylates the N4 position of cytidine in position 1402 (C1402) of 16S rRNA. In Pseudomonas putida (strain ATCC 47054 / DSM 6125 / CFBP 8728 / NCIMB 11950 / KT2440), this protein is Ribosomal RNA small subunit methyltransferase H.